Here is a 253-residue protein sequence, read N- to C-terminus: Zinc import ATP-binding protein ZnuC (253 aa).

Positions 6–227 (VTLNKISVTF…FGNRGAEQLA (222 aa)) constitute an ABC transporter domain. 38-45 (GPNGAGKS) lines the ATP pocket.

This sequence belongs to the ABC transporter superfamily. Zinc importer (TC 3.A.1.15.5) family. As to quaternary structure, the complex is composed of two ATP-binding proteins (ZnuC), two transmembrane proteins (ZnuB) and a solute-binding protein (ZnuA).

The protein resides in the cell inner membrane. The catalysed reaction is Zn(2+)(out) + ATP(in) + H2O(in) = Zn(2+)(in) + ADP(in) + phosphate(in) + H(+)(in). Functionally, part of the ABC transporter complex ZnuABC involved in zinc import. Responsible for energy coupling to the transport system. This chain is Zinc import ATP-binding protein ZnuC, found in Yersinia pestis bv. Antiqua (strain Antiqua).